Consider the following 316-residue polypeptide: Cuticle collagen 13 (316 aa).

The signal sequence occupies residues 1–36 (MSEDLKQIAQETESLRKVAFFGIAVSTIATLTAIIA). Composition is skewed to low complexity over residues 127-157 (SGAAGPAGSPGQDGAPGNDGAPGAPGNPGQD) and 183-204 (APGQKGPSGAPGAPGQSGGAAL). A disordered region spans residues 127–316 (SGAAGPAGSP…CPPPRTAPGY (190 aa)). 5 triple-helical region regions span residues 128 to 157 (GAAGPAGSPGQDGAPGNDGAPGAPGNPGQD), 176 to 202 (GPPGPSGAPGQKGPSGAPGAPGQSGGA), 206 to 235 (GPPGPAGPPGPAGQPGSNGNAGAPGAPGQV), 240 to 266 (GTPGPAGPPGSPGPAGAPGQPGQAGSS), and 269 to 304 (GGPGPQGDAGAPGAPGAPGQAGAPGQDGESGSEGAC). The span at 205 to 217 (PGPPGPAGPPGPA) shows a compositional bias: pro residues. The segment covering 219–234 (QPGSNGNAGAPGAPGQ) has biased composition (low complexity). Positions 241–251 (TPGPAGPPGSP) are enriched in pro residues. 2 stretches are compositionally biased toward low complexity: residues 256–266 (APGQPGQAGSS) and 276–295 (DAGAPGAPGAPGQAGAPGQD). A compositionally biased stretch (pro residues) spans 307-316 (CPPPRTAPGY).

The protein belongs to the cuticular collagen family. In terms of assembly, collagen polypeptide chains are complexed within the cuticle by disulfide bonds and other types of covalent cross-links.

Functionally, nematode cuticles are composed largely of collagen-like proteins. The cuticle functions both as an exoskeleton and as a barrier to protect the worm from its environment. The protein is Cuticle collagen 13 (col-13) of Caenorhabditis elegans.